The following is a 378-amino-acid chain: Mas-related G-protein coupled receptor MRG (378 aa).

The Extracellular segment spans residues 1 to 77 (MVWGKICWFS…VGQQALPLNI (77 aa)). N-linked (GlcNAc...) asparagine glycosylation is found at Asn-54 and Asn-57. A helical membrane pass occupies residues 78–101 (IAPKAVLVSLCGVLLNGTVFWLLC). The Cytoplasmic portion of the chain corresponds to 102–109 (CGATNPYM). The helical transmembrane segment at 110 to 136 (VYILHLVAADVIYLCCSAVGFLQVTLL) threads the bilayer. Over 137–154 (TYHGVVFFIPDFLAILSP) the chain is Extracellular. A helical membrane pass occupies residues 155–169 (FSFEVCLCLLVAIST). Over 170-191 (ERCVCVLFPIWYRCHRPKYTSN) the chain is Cytoplasmic. The helical transmembrane segment at 192 to 207 (VVCTLIWGLPFCINIV) threads the bilayer. Residues 208–221 (KSLFLTYWKHVKAC) are Extracellular-facing. The helical transmembrane segment at 222–248 (VIFLKLSGLFHAILSLVMCVSSLTLLI) threads the bilayer. At 249–264 (RFLCCSQQQKATRVYA) the chain is on the cytoplasmic side. The helical transmembrane segment at 265–286 (VVQISAPMFLLWALPLSVAPLI) threads the bilayer. Over 287-297 (TDFKMFVTTSY) the chain is Extracellular. The helical transmembrane segment at 298 to 317 (LISLFLIINSSANPIIYFFV) threads the bilayer. The Cytoplasmic portion of the chain corresponds to 318–378 (GSLRKKRLKE…PREHRVDVET (61 aa)). The interval 344–378 (GRNKKAAGIDPMEQPHSTQHVENLLPREHRVDVET) is disordered. A compositionally biased stretch (basic and acidic residues) spans 368 to 378 (LPREHRVDVET).

This sequence belongs to the G-protein coupled receptor 1 family. Mas subfamily.

The protein resides in the cell membrane. The chain is Mas-related G-protein coupled receptor MRG (MAS1L) from Homo sapiens (Human).